Consider the following 1032-residue polypeptide: Vacuolar membrane protease (1032 aa).

At 1-11 (MKLGNPFVFRP) the chain is on the cytoplasmic side. Residues 12-32 (GPVSFWTTIVYLAIIIPLIYV) form a helical membrane-spanning segment. Residues 33–415 (QETVPPAPSE…SAFALRGLFA (383 aa)) lie on the Vacuolar side of the membrane. N-linked (GlcNAc...) asparagine glycans are attached at residues Asn-50, Asn-138, and Asn-147. Zn(2+)-binding residues include His-194 and Asp-206. Residue Glu-240 is the Proton acceptor of the active site. Zn(2+) contacts are provided by Glu-241, Glu-266, and His-339. Residues 416-436 (WTLTLLITTPLVLFVVTYLLV) traverse the membrane as a helical segment. Over 437–469 (RDDKWYFFATKVDSTVGDGEETVSFGGWKGFVR) the chain is Cytoplasmic. The helical transmembrane segment at 470 to 490 (FPFALVVATALTIGSVFLLAK) threads the bilayer. At 491 to 493 (VNP) the chain is on the vacuolar side. A helical membrane pass occupies residues 494 to 514 (LIIYSSGYSVWAMMISLFYFV). At 515–532 (SWLLLRGAHFVRPSALQR) the chain is on the cytoplasmic side. The helical transmembrane segment at 533–553 (GFTLIWLFIITWVLSVFAAVA) threads the bilayer. At 554-560 (EDRMNMG) the chain is on the vacuolar side. Residues 561-581 (AVYPLAFLHTFAFAAVLISLL) form a helical membrane-spanning segment. Over 582–701 (EQYALPAKQD…WSGRLPTWTW (120 aa)) the chain is Cytoplasmic. The disordered stretch occupies residues 595–688 (QVSGENEEEE…RKRSFPPYEN (94 aa)). Residues 599–608 (ENEEEEEQEQ) show a composition bias toward acidic residues. Residues 651–660 (SSEQTTTFAN) show a composition bias toward polar residues. Residues 702-722 (FIQLLLLVPLYVTVLGNLALV) traverse the membrane as a helical segment. Topologically, residues 723–738 (QTTSIGKTGTDGSSLL) are vacuolar. A helical transmembrane segment spans residues 739 to 759 (APLMGVGILAILLLLPLTPFI). The Cytoplasmic segment spans residues 760–766 (HRVSHHV). The helical transmembrane segment at 767 to 787 (PLFLFLVFIGTLIYNLTAFPF) threads the bilayer. Residues 788 to 1032 (SDNNRFKFYF…VEITKKIKVA (245 aa)) are Vacuolar-facing. Asn-940 carries N-linked (GlcNAc...) asparagine glycosylation.

It belongs to the peptidase M28 family. Zn(2+) is required as a cofactor.

It is found in the vacuole membrane. Its function is as follows. May be involved in vacuolar sorting and osmoregulation. The chain is Vacuolar membrane protease from Metarhizium robertsii (strain ARSEF 23 / ATCC MYA-3075) (Metarhizium anisopliae (strain ARSEF 23)).